A 360-amino-acid polypeptide reads, in one-letter code: Hydroxyproline O-arabinosyltransferase RDN2 (360 aa).

A helical; Signal-anchor membrane pass occupies residues 13-33 (VLGSSFATYNLVTMIIHYGSA).

It localises to the golgi apparatus membrane. It carries out the reaction trans-4-hydroxy-L-prolyl-[protein] + UDP-beta-L-arabinofuranose = O-(beta-L-arabinofuranosyl)-trans-4-hydroxy-L-prolyl-[protein] + UDP + H(+). Its function is as follows. Glycosyltransferase involved in the O-arabinosylation of several proteins including extensins and small signaling peptides. Catalyzes the transfer of the initial L-arabinose to the hydroxyl group of Hyp residues. Probably involved in the arabinosylation of CLAVATA3/ESR-related (CLE) signaling peptides that move from root to shoot, to interact with SUNN receptor kinase signaling that regulates nodulation. Involved in long distance nodulation signaling events. Involved in the autoregulation of nodulation (AON), a long distance systemic signaling from root to shoot and back again, which allows legumes to limit the number of root nodules formed based on available nitrogen and previous rhizobial colonization. Functions in the root, upstream of the shoot receptor kinase SUNN and via CLE peptide, to control AON. The sequence is that of Hydroxyproline O-arabinosyltransferase RDN2 from Medicago truncatula (Barrel medic).